A 161-amino-acid polypeptide reads, in one-letter code: Nucleotide-binding protein PFLU_4927 (161 aa).

It belongs to the YajQ family.

Nucleotide-binding protein. The polypeptide is Nucleotide-binding protein PFLU_4927 (Pseudomonas fluorescens (strain SBW25)).